A 444-amino-acid polypeptide reads, in one-letter code: Cop9 signalosome complex subunit 11 (444 aa).

One can recognise a PCI domain in the interval 195–367; sequence FFTMMTSEPL…IHFEDSSILQ (173 aa). A disordered region spans residues 419-439; it reads SSDDMDIDEVNDRSDISDSEG.

As to quaternary structure, component of a COP9 signalosome-like (CSN) complex, composed of RRI1/CSN5, CSN9, RRI2/CSN10, PCI8/CSN11, CSN12 and CSI1. Interacts with PRT1 and RPG1, 2 subunits of the core complex of translation initiation factor 3 (eIF3).

Its subcellular location is the cytoplasm. The protein resides in the nucleus. In terms of biological role, component of the COP9 signalosome (CSN) complex that acts as an regulator of the ubiquitin (Ubl) conjugation pathway by mediating the deneddylation of the cullin subunit of SCF-type E3 ubiquitin-protein ligase complexes The CSN complex is involved in the regulation of the mating pheromone response. PCI8 may also be involved in transcriptional and translational control. This Saccharomyces cerevisiae (strain ATCC 204508 / S288c) (Baker's yeast) protein is Cop9 signalosome complex subunit 11 (PCI8).